The primary structure comprises 519 residues: tRNA pseudouridine synthase Pus10 (519 aa).

The segment at 70–98 is disordered; it reads NENEEIDENTKNNEDTENKADDKSQSNEE. The segment covering 77 to 98 has biased composition (basic and acidic residues); sequence ENTKNNEDTENKADDKSQSNEE. In terms of domain architecture, THUMP spans 144 to 265; the sequence is NESEENESNI…NQKIYLQINP (122 aa). Asp334 serves as the catalytic Nucleophile. Positions 398 and 476 each coordinate substrate.

The protein belongs to the pseudouridine synthase Pus10 family.

The enzyme catalyses uridine(54) in tRNA = pseudouridine(54) in tRNA. It carries out the reaction uridine(55) in tRNA = pseudouridine(55) in tRNA. Functionally, responsible for synthesis of pseudouridine from uracil-54 and uracil-55 in the psi GC loop of transfer RNAs. The polypeptide is tRNA pseudouridine synthase Pus10 (Methanococcus voltae (strain ATCC BAA-1334 / A3)).